Reading from the N-terminus, the 227-residue chain is MMLHIPGVLTKAQVAQCREMLDTADWVDGNATSGAQSALAKRNRQLPEGSPVARTVGDAIQDALARHPLFFSAALPLKVFPPLFNRYEGGETFGTHVDNAIRLLRGTDFRVRSDLSATLFLEEPDAYDGGELCVEDTYGVHRAKLPAGDLVLYPASSLHHVTPVTRGERVASFFWIQSMVRDDGDRTLLFQLDTQIQALSAEKGAKDPVVISLTGIYHNLLRKWADA.

One can recognise a Fe2OG dioxygenase domain in the interval Lys78–Ser178. His96, Asp98, and His159 together coordinate Fe cation. Residue Arg169 coordinates 2-oxoglutarate.

It depends on Fe(2+) as a cofactor. L-ascorbate serves as cofactor.

The protein is PKHD-type hydroxylase Bcen_3557 of Burkholderia orbicola (strain AU 1054).